The chain runs to 890 residues: Translation initiation factor IF-2 (890 aa).

Positions 110-216 are disordered; the sequence is ISKPISKAPQ…KKPLIKTQDH (107 aa). Over residues 135-148 the composition is skewed to basic residues; that stretch reads VPKRKGLVIIKKKR. The span at 184 to 199 shows a compositional bias: basic and acidic residues; it reads KSYNEPKNKENDDIKK. Positions 200-210 are enriched in basic residues; the sequence is QKVKKEKKKPL. A tr-type G domain is found at 387–554; it reads TRPPVVTIMG…NILLQAEILE (168 aa). The G1 stretch occupies residues 396–403; it reads GHVDHGKT. 396-403 contributes to the GTP binding site; that stretch reads GHVDHGKT. The G2 stretch occupies residues 421–425; the sequence is GITQH. The segment at 442-445 is G3; the sequence is DTPG. GTP contacts are provided by residues 442 to 446 and 496 to 499; these read DTPGH and NKMD. The interval 496–499 is G4; it reads NKMD. Residues 532-534 are G5; that stretch reads SAR.

This sequence belongs to the TRAFAC class translation factor GTPase superfamily. Classic translation factor GTPase family. IF-2 subfamily.

Its subcellular location is the cytoplasm. Functionally, one of the essential components for the initiation of protein synthesis. Protects formylmethionyl-tRNA from spontaneous hydrolysis and promotes its binding to the 30S ribosomal subunits. Also involved in the hydrolysis of GTP during the formation of the 70S ribosomal complex. The chain is Translation initiation factor IF-2 from Aliarcobacter butzleri (strain RM4018) (Arcobacter butzleri).